Consider the following 395-residue polypeptide: Flap endonuclease 1 (395 aa).

The segment at 1–104 is N-domain; that stretch reads MGIKHLYQVI…GELAKRFMRK (104 aa). A Mg(2+)-binding site is contributed by Asp-34. The DNA site is built by Arg-47 and Arg-70. 5 residues coordinate Mg(2+): Asp-86, Glu-158, Glu-160, Asp-179, and Asp-181. Residues 122–253 form an I-domain region; it reads DVEKFSRRTV…NTALKLIRDH (132 aa). Glu-158 serves as a coordination point for DNA. Residues Gly-231 and Asp-233 each contribute to the DNA site. Residue Asp-233 participates in Mg(2+) binding. The interval 341-349 is interaction with PCNA; the sequence is QQSRLEGFF. Positions 357–389 are enriched in basic and acidic residues; it reads QEKATLKRKHEEKLELQKKKKKEEAKAKKEAKS. Positions 357 to 395 are disordered; that stretch reads QEKATLKRKHEEKLELQKKKKKEEAKAKKEAKSKPRGAV.

Belongs to the XPG/RAD2 endonuclease family. FEN1 subfamily. In terms of assembly, interacts with PCNA. Three molecules of FEN1 bind to one PCNA trimer with each molecule binding to one PCNA monomer. PCNA stimulates the nuclease activity without altering cleavage specificity. Requires Mg(2+) as cofactor. Phosphorylated. Phosphorylation upon DNA damage induces relocalization to the nuclear plasma.

It is found in the nucleus. The protein resides in the nucleolus. Its subcellular location is the nucleoplasm. It localises to the mitochondrion. In terms of biological role, structure-specific nuclease with 5'-flap endonuclease and 5'-3' exonuclease activities involved in DNA replication and repair. During DNA replication, cleaves the 5'-overhanging flap structure that is generated by displacement synthesis when DNA polymerase encounters the 5'-end of a downstream Okazaki fragment. It enters the flap from the 5'-end and then tracks to cleave the flap base, leaving a nick for ligation. Also involved in the long patch base excision repair (LP-BER) pathway, by cleaving within the apurinic/apyrimidinic (AP) site-terminated flap. Acts as a genome stabilization factor that prevents flaps from equilibrating into structures that lead to duplications and deletions. Also possesses 5'-3' exonuclease activity on nicked or gapped double-stranded DNA, and exhibits RNase H activity. Also involved in replication and repair of rDNA and in repairing mitochondrial DNA. This Ajellomyces dermatitidis (strain ER-3 / ATCC MYA-2586) (Blastomyces dermatitidis) protein is Flap endonuclease 1.